We begin with the raw amino-acid sequence, 220 residues long: StAR-related lipid transfer protein 6 (220 aa).

The START domain occupies 1-208; that stretch reads MDFKAIAQQT…AKDGIKAHRT (208 aa).

Functionally, may be involved in the intracellular transport of sterols or other lipids. May bind cholesterol or other sterols. The chain is StAR-related lipid transfer protein 6 (STARD6) from Homo sapiens (Human).